The following is a 728-amino-acid chain: MIVDKLLDDSRGGEGLLDAAGDCGLMTSPLNLAYFYGASPPSAPGAGDTGYLSAVPSAPGSPGSDSSDFSSTSSVSSCGAVESRPRGGARAERPQVEPHMGVGRQQRGPFQGVRVKNSVKELLLHIRSNKQKASGQPVDEFKTQSVNIEQLTDLKSAVSAVGKRKGPDPLSDGPVCKRPALLPSHFVTSPQTPTPGESMEDVRHSESKLDSSAALLQNIINIKNECNPVSLNTVQVSWMSPTVPQNSPRDQCQDFHGGQAFSPPQKYQPFQVSGSPQMMDQASMYQYSPQTQNMQQPPPLPPQQQHQQNYPHNSPLQFSPYSRMSQSPKYDSNLFDTHEPQFCTGQSFVSLLTGPGEPESLAVPVPAPTSIPPQTETQLQTFSLMPSNACEAVVGVHDVGSHSLGTSLSLQNIMGSPMNTTQLGKSFFQWQVEQEESKLANIPQDQFLARDGDGDTFLHIAVAQGRRALSYVLARKMNALHMLDIKEHNGQSAFQVAVAANQHLIVQDLVNLGAQVNTTDCWGRTPLHVCAEKGHSQVLQAIQKGAVRSNQFVDLEATNYDGLTPLHCAVVAHNAVVHELQRNRQSHSPEVQDLLLRNKSLVDTIKCLIQMGAAVEAKDRKSGRTALHLAAEEANLELIRLFLELPSCLSFVNAKAYNGNTALHVAASLQYRVTQLDAVRLLMRKGADPSTRNLENEQPVHLVPDGPVGEQIRRILKGKSIQQRAPPY.

Positions 45–107 (GAGDTGYLSA…PHMGVGRQQR (63 aa)) are disordered. The segment covering 53 to 82 (SAVPSAPGSPGSDSSDFSSTSSVSSCGAVE) has biased composition (low complexity). Residues 83-96 (SRPRGGARAERPQV) show a composition bias toward basic and acidic residues. The 23-residue stretch at 107–129 (RGPFQGVRVKNSVKELLLHIRSN) folds into the OCA domain. Residues 163 to 178 (KRKGPDPLSDGPVCKR) carry the Nuclear localization signal motif. Polar residues-rich tracts occupy residues 241–250 (PTVPQNSPRD) and 268–288 (QPFQ…YQYS). Residues 241–334 (PTVPQNSPRD…SQSPKYDSNL (94 aa)) form a disordered region. Residues 303-315 (QQQHQQNYPHNSP) are compositionally biased toward low complexity. The segment covering 316-330 (LQFSPYSRMSQSPKY) has biased composition (polar residues). The tract at residues 329 to 403 (KYDSNLFDTH…VGVHDVGSHS (75 aa)) is required for transcriptional activity. The interval 414 to 728 (MGSPMNTTQL…KSIQQRAPPY (315 aa)) is interaction with NFKB1/p50. ANK repeat units follow at residues 453–482 (DGDT…ALHM), 489–518 (NGQS…QVNT), 522–551 (WGRT…RSNQ), 561–589 (DGLT…SHSP), 591–617 (VQDL…AVEA), 622–651 (SGRT…CLSF), and 658–691 (NGNT…DPST).

In terms of assembly, interacts with NFKB1/p50. Interacts with RELA. Interacts with AKIRIN2. In terms of tissue distribution, expressed in kidney, liver, lung and heart. Expressed at very low levels in skeletal muscle, spleen and brain.

The protein resides in the nucleus. Functionally, involved in regulation of NF-kappa-B transcription factor complexes. Inhibits NF-kappa-B activity without affecting its nuclear translocation upon stimulation. Inhibits DNA-binding of RELA and NFKB1/p50, and of the NF-kappa-B p65-p50 heterodimer and the NF-kappa-B p50-p50 homodimer. Also seems to activate NF-kappa-B-mediated transcription. In vitro, upon association with NFKB1/p50 has transcriptional activation activity and, together with NFKB1/p50 and RELA, is recruited to LCN2 promoters. Promotes transcription of LCN2 and DEFB4. Is recruited to IL-6 promoters and activates IL-6 but decreases TNF-alpha production in response to LPS. Seems to be involved in the induction of inflammatory genes activated through TLR/IL-1 receptor signaling. Involved in the induction of T helper 17 cells (Th17) differentiation upon recognition of antigen by T cell antigen receptor (TCR). The sequence is that of NF-kappa-B inhibitor zeta (Nfkbiz) from Mus musculus (Mouse).